The primary structure comprises 374 residues: Formylglycine-generating enzyme (374 aa).

A signal peptide spans 1–33 (MAAPALGPARGCGAELTLVLLLSLFLLLGWAAG). The cysteines at positions 50 and 52 are disulfide-linked. The disordered stretch occupies residues 57–102 (RPGAQGSSAAAHRYSREANAPGSVPGGRPSPPTKMVPIPAGVFTMG). Residue E130 coordinates Ca(2+). N141 is a glycosylation site (N-linked (GlcNAc...) asparagine). 2 cysteine pairs are disulfide-bonded: C218–C365 and C235–C346. Ca(2+)-binding residues include N259, I260, D273, F275, N293, G296, A298, and E300. Residues C336 and C341 each coordinate Cu(2+). The interval 341-360 (CYRYRCAARSQNTPDSSASN) is interaction with sulfatases.

This sequence belongs to the sulfatase-modifying factor family. As to quaternary structure, monomer, homodimer and heterodimer with SUMF2. It depends on Cu(2+) as a cofactor. Post-translationally, N-glycosylated. Contains high-mannose-type oligosaccharides.

The protein resides in the endoplasmic reticulum lumen. The catalysed reaction is L-cysteinyl-[sulfatase] + 2 a thiol + O2 = an organic disulfide + 3-oxo-L-alanyl-[sulfatase] + hydrogen sulfide + H2O + H(+). It participates in protein modification; sulfatase oxidation. Oxidase that catalyzes the conversion of cysteine to 3-oxoalanine on target proteins, using molecular oxygen and an unidentified reducing agent. 3-oxoalanine modification, which is also named formylglycine (fGly), occurs in the maturation of arylsulfatases and some alkaline phosphatases that use the hydrated form of 3-oxoalanine as a catalytic nucleophile. Known substrates include GALNS, ARSA, STS and ARSE. This is Formylglycine-generating enzyme from Bos taurus (Bovine).